Reading from the N-terminus, the 227-residue chain is Probable GTP-binding protein EngB (227 aa).

An EngB-type G domain is found at 13–188 (IGLEVAFAGR…AGVMGNWYEY (176 aa)). GTP-binding positions include 21–28 (GRSNAGKS), 48–52 (GRTQM), 67–70 (DLPG), 134–137 (TKAD), and 167–169 (FSA). Positions 28 and 50 each coordinate Mg(2+).

This sequence belongs to the TRAFAC class TrmE-Era-EngA-EngB-Septin-like GTPase superfamily. EngB GTPase family. Requires Mg(2+) as cofactor.

Necessary for normal cell division and for the maintenance of normal septation. This Psychrobacter cryohalolentis (strain ATCC BAA-1226 / DSM 17306 / VKM B-2378 / K5) protein is Probable GTP-binding protein EngB.